Here is a 323-residue protein sequence, read N- to C-terminus: UDP-N-acetylenolpyruvoylglucosamine reductase (323 aa).

Residues 33–214 enclose the FAD-binding PCMH-type domain; it reads IGGPAEALFC…LSAVFTLTHG (182 aa). Residue Ser-243 is the Proton donor of the active site. Glu-315 is an active-site residue.

The protein belongs to the MurB family. FAD serves as cofactor.

The protein resides in the cytoplasm. It catalyses the reaction UDP-N-acetyl-alpha-D-muramate + NADP(+) = UDP-N-acetyl-3-O-(1-carboxyvinyl)-alpha-D-glucosamine + NADPH + H(+). It participates in cell wall biogenesis; peptidoglycan biosynthesis. Its function is as follows. Cell wall formation. In Treponema denticola (strain ATCC 35405 / DSM 14222 / CIP 103919 / JCM 8153 / KCTC 15104), this protein is UDP-N-acetylenolpyruvoylglucosamine reductase.